Here is a 263-residue protein sequence, read N- to C-terminus: Indolethylamine N-methyltransferase (263 aa).

Lys-13 is subject to N6-succinyllysine. S-adenosyl-L-methionine is bound by residues Tyr-20, Tyr-25, Gly-63, Tyr-69, 85–87 (DFT), and Asn-90. N6-succinyllysine is present on Lys-96. Residues 142–143 (DV) and Leu-163 each bind S-adenosyl-L-methionine.

It belongs to the class I-like SAM-binding methyltransferase superfamily. NNMT/PNMT/TEMT family. As to quaternary structure, monomer. In terms of tissue distribution, widely expressed. The highest levels were in thyroid, adrenal gland, adult and fetal lung. Intermediate levels in heart, placenta, skeletal muscle, testis, small intestine, pancreas, stomach, spinal cord, lymph node and trachea. Very low levels in adult and fetal kidney and liver, in adult spleen, thymus, ovary, colon and bone marrow. Not expressed in peripheral blood leukocytes and brain.

The protein localises to the cytoplasm. The catalysed reaction is a tertiary amine + S-adenosyl-L-methionine = a methylated tertiary amine + S-adenosyl-L-homocysteine + H(+). It carries out the reaction a secondary amine + S-adenosyl-L-methionine = a methylated secondary amine + S-adenosyl-L-homocysteine + H(+). The enzyme catalyses a primary amine + S-adenosyl-L-methionine = a methylated primary amine + S-adenosyl-L-homocysteine + H(+). It catalyses the reaction dimethyl sulfide + S-adenosyl-L-methionine = trimethylsulfonium + S-adenosyl-L-homocysteine. Its function is as follows. Functions as a thioether S-methyltransferase and is active with a variety of thioethers and the corresponding selenium and tellurium compounds, including 3-methylthiopropionaldehyde, dimethyl selenide, dimethyl telluride, 2-methylthioethylamine, 2-methylthioethanol, methyl-n-propyl sulfide and diethyl sulfide. Plays an important role in the detoxification of selenium compounds. Catalyzes the N-methylation of tryptamine and structurally related compounds. This Homo sapiens (Human) protein is Indolethylamine N-methyltransferase (INMT).